A 392-amino-acid chain; its full sequence is Alaserpin (392 aa).

The N-terminal stretch at 1–16 is a signal peptide; that stretch reads MKIIMCIFGLAALAMA. Asparagine 85 carries N-linked (GlcNAc...) asparagine glycosylation.

The protein belongs to the serpin family. Hemolymph.

It localises to the secreted. The protein localises to the extracellular space. Functionally, inhibits elastase. The sequence is that of Alaserpin from Manduca sexta (Tobacco hawkmoth).